Reading from the N-terminus, the 347-residue chain is MNPLAQPIIYPTIFTGTLITALSSHWFFAWLGLEMNMLAFIPVLTKKTSPRSTEAAIKYFLTQATASMILLMAILYNNMLSGQWTTTNTTNPYSSLMIVTALAMKLGMAPFHFWVPEVTQGVPLTSGLLLLTWQKLAPISIMYQMSSSVDTNILLTLSILSILVGGWGGLNQTQLRKILAYSSITHMGWMMAVLPYNPDITILNLIIYIILTTTAFLILDLNSSVTILMLTRTWNKLTWLMPLIPSTLLSLGGLPPLTGFLPKWAIIEEFAKNGNLITPTIMAIITLLNLYFYVRLIYATSITLLPMSNNAKMKWQFENTKPTPLLPTLTILTTLLLPISPLILSIS.

10 consecutive transmembrane segments (helical) span residues 13 to 33 (IFTG…WLGL), 55 to 75 (AAIK…MAIL), 96 to 116 (LMIV…FWVP), 122 to 142 (VPLT…ISIM), 151 to 171 (TNIL…GGLN), 178 to 198 (ILAY…PYNP), 199 to 219 (DITI…FLIL), 237 to 257 (LTWL…LPPL), 274 to 294 (GNLI…YFYV), and 326 to 346 (LPTL…ILSI).

It belongs to the complex I subunit 2 family. As to quaternary structure, core subunit of respiratory chain NADH dehydrogenase (Complex I) which is composed of 45 different subunits. Interacts with TMEM242.

It localises to the mitochondrion inner membrane. It carries out the reaction a ubiquinone + NADH + 5 H(+)(in) = a ubiquinol + NAD(+) + 4 H(+)(out). Core subunit of the mitochondrial membrane respiratory chain NADH dehydrogenase (Complex I) which catalyzes electron transfer from NADH through the respiratory chain, using ubiquinone as an electron acceptor. Essential for the catalytic activity and assembly of complex I. The polypeptide is NADH-ubiquinone oxidoreductase chain 2 (Pongo abelii (Sumatran orangutan)).